Reading from the N-terminus, the 640-residue chain is RNA polymerase II elongation factor ELL2 (640 aa).

3 disordered regions span residues 172-202, 290-320, and 343-490; these read AVSD…STIS, KLNP…PQKR, and RVPP…EEDL. Composition is skewed to polar residues over residues 184–202 and 291–318; these read TPMN…STIS and LNPS…SSPQ. A compositionally biased stretch (low complexity) spans 360 to 372; the sequence is AAGLPLPPAAAAI. Residues 391 to 401 show a composition bias toward polar residues; it reads IVNSNSNSPST. Over residues 457–470 the composition is skewed to basic residues; it reads MSHKKSKKKSKKHK. Over residues 471-490 the composition is skewed to basic and acidic residues; it reads EKDQIKKHDIETIEEKEEDL. 2 positions are modified to phosphoserine: Ser503 and Ser580. The region spanning 526 to 636 is the OCEL domain; it reads PDYLIKYIAI…LIGEFDQQQA (111 aa).

Belongs to the ELL/occludin family. As to quaternary structure, component of the super elongation complex (SEC), at least composed of EAF1, EAF2, CDK9, MLLT3/AF9, AFF (AFF1 or AFF4), the P-TEFb complex and ELL (ELL, ELL2 or ELL3). Component of the little elongation complex (LEC), at least composed of ELL (ELL, ELL2 or ELL3), ZC3H8, ICE1 and ICE2. Interacts with AFF4; the interaction is direct and leads to stabilize ELL2 and prevent ELL2 ubiquitination. Interacts with EAF1 and EAF2. Post-translationally, ubiquitinated by SIAH1, leading to its degradation by the proteasome. Interaction with AFF4 stabilizes ELL2 and prevents ELL2 ubiquitination.

The protein localises to the nucleus. Elongation factor component of the super elongation complex (SEC), a complex required to increase the catalytic rate of RNA polymerase II transcription by suppressing transient pausing by the polymerase at multiple sites along the DNA. Component of the little elongation complex (LEC), a complex required to regulate small nuclear RNA (snRNA) gene transcription by RNA polymerase II and III. Plays a role in immunoglobulin secretion in plasma cells: directs efficient alternative mRNA processing, influencing both proximal poly(A) site choice and exon skipping, as well as immunoglobulin heavy chain (IgH) alternative processing. Probably acts by regulating histone modifications accompanying transition from membrane-specific to secretory IgH mRNA expression. The chain is RNA polymerase II elongation factor ELL2 (ELL2) from Homo sapiens (Human).